We begin with the raw amino-acid sequence, 463 residues long: D-inositol 3-phosphate glycosyltransferase (463 aa).

Residue His40 participates in 1D-myo-inositol 3-phosphate binding. Residues 46 to 47 (QP) and Gly54 each bind UDP-N-acetyl-alpha-D-glucosamine. 1D-myo-inositol 3-phosphate contacts are provided by residues 51–56 (DAGGMN), Lys109, Tyr142, Thr166, and Arg186. UDP-N-acetyl-alpha-D-glucosamine-binding residues include Arg260, Lys265, and Gln318. Mg(2+)-binding residues include Phe327, His328, and Val330. The UDP-N-acetyl-alpha-D-glucosamine site is built by Glu340 and Glu348. Position 354 (Thr354) interacts with Mg(2+). The disordered stretch occupies residues 443–463 (VRDPVAARKPRRWTARRGVGA).

It belongs to the glycosyltransferase group 1 family. MshA subfamily. In terms of assembly, homodimer.

It carries out the reaction 1D-myo-inositol 3-phosphate + UDP-N-acetyl-alpha-D-glucosamine = 1D-myo-inositol 2-acetamido-2-deoxy-alpha-D-glucopyranoside 3-phosphate + UDP + H(+). Its function is as follows. Catalyzes the transfer of a N-acetyl-glucosamine moiety to 1D-myo-inositol 3-phosphate to produce 1D-myo-inositol 2-acetamido-2-deoxy-glucopyranoside 3-phosphate in the mycothiol biosynthesis pathway. The protein is D-inositol 3-phosphate glycosyltransferase of Mycobacterium ulcerans (strain Agy99).